Here is a 75-residue protein sequence, read N- to C-terminus: Caerin-1.1 (75 aa).

Residues 1–22 form the signal peptide; the sequence is MASLKKSLFLVLLLGFVSVSIC. A propeptide spanning residues 23-49 is cleaved from the precursor; that stretch reads EEEKRQEDEDEHEEEGESQEEGSEEKR. Residues 24-49 form a disordered region; sequence EEKRQEDEDEHEEEGESQEEGSEEKR. Positions 30–45 are enriched in acidic residues; sequence DEDEHEEEGESQEEGS. Leucine 74 is subject to Leucine amide.

This sequence belongs to the frog skin active peptide (FSAP) family. Caerin subfamily. In terms of processing, the major product is Caerin-1.1; in addition, different peptides are produced that are missing some amino acid residues at the N-terminus or C-terminus. Caerin-1.1.1 and Caerin-1.1.4 are inactive. As to expression, expressed by the skin parotoid and/or rostral glands.

Its subcellular location is the secreted. Functionally, antimicrobial peptide with antibacterial and antiviral activities. Adopts an alpha helical conformation which can disrupt bacterial membranes. Inhibits the formation of NO by neuronal nitric oxide synthase (nNOS) at micromolar concentrations. Acts by a non-competitive mechanism, probably by binding to calcium/calmodulin and as a consequence blocking calmodulin attachment to nNOS. Is inactive. This Ranoidea caerulea (Green tree frog) protein is Caerin-1.1.